The primary structure comprises 29 residues: Dermaseptin-J8 (29 aa).

In terms of tissue distribution, expressed by the skin glands.

It is found in the secreted. Has antimicrobial activity. The sequence is that of Dermaseptin-J8 from Phasmahyla jandaia (Jandaia leaf frog).